The primary structure comprises 473 residues: UDP-glycosyltransferase 71A27 (473 aa).

H15 serves as the catalytic Proton acceptor. H15 contributes to the an anthocyanidin binding site. D117 serves as the catalytic Charge relay. UDP-alpha-D-glucose contacts are provided by A345, Q347, H362, W365, N366, S367, and E370. An an anthocyanidin-binding site is contributed by G385. Residues E386 and Q387 each contribute to the UDP-alpha-D-glucose site.

Belongs to the UDP-glycosyltransferase family.

It carries out the reaction (20S)-protopanaxadiol + UDP-alpha-D-glucose = (20S)-ginsenoside C-K + UDP + H(+). The protein operates within secondary metabolite biosynthesis; terpenoid biosynthesis. In terms of biological role, component of the triterpene saponins (e.g. PPD-type ginsenosides or panaxosides) biosynthetic pathways. Glycosyltransferase that catalyzes the biosynthesis of compound K from protopanaxadiol (PPD). In Panax ginseng (Korean ginseng), this protein is UDP-glycosyltransferase 71A27.